Consider the following 72-residue polypeptide: Dermaseptin-A4 (72 aa).

Residues 1–22 form the signal peptide; it reads MAFLKKSLFLVLFLGMVSLSIC. The propeptide occupies 23–41; sequence EEEKREEENEQEDDEQSEE. The segment at 24-43 is disordered; the sequence is EEKREEENEQEDDEQSEEKR. The span at 30–39 shows a compositional bias: acidic residues; the sequence is ENEQEDDEQS. Position 69 is an alanine amide (Ala-69). Positions 71-72 are excised as a propeptide; that stretch reads EQ.

It belongs to the frog skin active peptide (FSAP) family. Dermaseptin subfamily. Expressed by the skin glands.

It is found in the secreted. In terms of biological role, possesses a potent antimicrobial activity against Gram-positive and Gram-negative bacteria. Probably acts by disturbing membrane functions with its amphipathic structure. The protein is Dermaseptin-A4 of Agalychnis annae (Blue-sided leaf frog).